Here is an 812-residue protein sequence, read N- to C-terminus: Valine--tRNA ligase (812 aa).

The 'HIGH' region motif lies at 46–56; sequence PTVSGQLHIGH. Residues 536–540 carry the 'KMSKS' region motif; the sequence is KMSKS. An ATP-binding site is contributed by K539.

The protein belongs to the class-I aminoacyl-tRNA synthetase family. ValS type 2 subfamily. As to quaternary structure, monomer.

It localises to the cytoplasm. It catalyses the reaction tRNA(Val) + L-valine + ATP = L-valyl-tRNA(Val) + AMP + diphosphate. Its function is as follows. Catalyzes the attachment of valine to tRNA(Val). As ValRS can inadvertently accommodate and process structurally similar amino acids such as threonine, to avoid such errors, it has a 'posttransfer' editing activity that hydrolyzes mischarged Thr-tRNA(Val) in a tRNA-dependent manner. This chain is Valine--tRNA ligase, found in Rickettsia rickettsii (strain Iowa).